Here is a 1114-residue protein sequence, read N- to C-terminus: Constitutive coactivator of PPAR-gamma-like protein 1 (1114 aa).

The interaction with YES1, SRC and FYN stretch occupies residues 339 to 402 (PPHYLARPNP…YNLAEPALTL (64 aa)). Disordered stretches follow at residues 372 to 396 (QAKPVAPQVPSPGAPGQGPHPYNLA) and 411 to 519 (EQNY…GNQI). Residues 431–443 (SPINPAPSGSPNH) are compositionally biased toward polar residues. Positions 477–498 (GWEKTGSHSEPQARGDPGDQTK) are enriched in basic and acidic residues. The span at 499 to 510 (AEGSSTASSGSQ) shows a compositional bias: polar residues. The residue at position 651 (Thr651) is a Phosphothreonine. An RNA binding region spans residues 825–1114 (AEQAAKVEKM…LEAAVLKKEE (290 aa)). Omega-N-methylarginine is present on residues Arg869, Arg880, and Arg882. Residues 918 to 940 (FSGSDSSRTSKSQGGIQPIPSQG) are disordered. Residue Lys928 is modified to N6-acetyllysine. Residues 929–940 (SQGGIQPIPSQG) show a composition bias toward low complexity. The residue at position 956 (Ser956) is a Phosphoserine. An omega-N-methylarginine mark is found at Arg978 and Arg982. The tract at residues 1009–1099 (AIQGKPPYAA…LNALSTDSGC (91 aa)) is disordered. Ser1019 carries the phosphoserine modification. The segment covering 1022–1033 (EVAKELKSRSGE) has biased composition (basic and acidic residues). Polar residues predominate over residues 1034–1043 (SKSSAMSSDG). Phosphoserine is present on residues Ser1040, Ser1041, and Ser1044. Residues 1060-1097 (MNGSAGDTRAPSHSESALNNDSKTCNTNPHLNALSTDS) are compositionally biased toward polar residues.

The protein belongs to the constitutive coactivator of PPAR-gamma family. As to quaternary structure, interacts with PURA. Interacts with YES1, SRC, FYN. Upon tyrosine phosphorylation, interacts with PIK3R1. Post-translationally, arg-978 is dimethylated, probably to asymmetric dimethylarginine. In terms of processing, phosphorylated on tyrosine by src family kinases upon ultraviolet exposure.

Its subcellular location is the cytoplasm. It localises to the cell membrane. Functionally, component of the oxidative stress-induced survival signaling. May regulate the activation of SRC family protein kinases. May act as a scaffolding protein enabling SRC family protein kinases to phosphorylate and activate PI3-kinase. Binds IGF2 RNA and promotes the production of IGF2 protein. This Bos taurus (Bovine) protein is Constitutive coactivator of PPAR-gamma-like protein 1 (FAM120A).